A 502-amino-acid polypeptide reads, in one-letter code: Ubiquitin-associated protein 1 (502 aa).

Residues 1–95 (MASKKLGTDV…AEAKVNSKSG (95 aa)) are interaction with ESCRT-I. Positions 17 to 63 (LDDVPFKIGDKFKTPAKVGLPIGFSLPDCLQVVREMQYDFSLEKKTI) constitute a UMA domain. The segment covering 80–100 (ERKAEEAEAKVNSKSGPEGDS) has biased composition (basic and acidic residues). 2 disordered regions span residues 80–117 (ERKAEEAEAKVNSKSGPEGDSKVSFPKTHNTATMPPPI) and 135–156 (VSSSATKQKVLSPPHTKADFNP). 3 positions are modified to phosphoserine: serine 146, serine 205, and serine 289. Residues 260–290 (VSNIKSLSFPKLDSDDSNQKTVKLASTFHST) are interaction with PTPN23. UBA domains follow at residues 389 to 430 (SPSE…LFAH) and 451 to 498 (QCSE…LMAR).

As to quaternary structure, component of an ESCRT-I complex (endosomal sorting complex required for transport I) which consists of TSG101, VPS28, VPS37A and UBAP1 in a 1:1:1:1 stoichiometry. Interacts with PTPN23. Interacts (via UBA domains) with ubiquitinated proteins. As to expression, ubiquitous. Highly expressed in heart, liver, brain, kidney, spleen, skeletal muscle, stomach, testis and lung.

The protein localises to the cytoplasm. Its subcellular location is the cytosol. The protein resides in the endosome. Its function is as follows. Component of the ESCRT-I complex, a regulator of vesicular trafficking process. Binds to ubiquitinated cargo proteins and is required for the sorting of endocytic ubiquitinated cargos into multivesicular bodies (MVBs). Plays a role in the proteasomal degradation of ubiquitinated cell-surface proteins, such as EGFR and BST2. The sequence is that of Ubiquitin-associated protein 1 from Mus musculus (Mouse).